We begin with the raw amino-acid sequence, 58 residues long: Large ribosomal subunit protein uL30 (58 aa).

Belongs to the universal ribosomal protein uL30 family. As to quaternary structure, part of the 50S ribosomal subunit.

This chain is Large ribosomal subunit protein uL30, found in Parabacteroides distasonis (strain ATCC 8503 / DSM 20701 / CIP 104284 / JCM 5825 / NCTC 11152).